The primary structure comprises 606 residues: MGGCTSKPSTSSGRPNPFAPGNDYPQIDDFAPDHPGKSPIPTPSAAKASPFFPFYTPSPARHRRNKSRDVGGGGESKSLTSTPLRQLRRAFHPPSPAKHIRAALRRRKGKKEAALSGVTQLTTEVPQREEEEEVGLDKRFGFSKEFHSRVELGEEIGRGHFGYTCSAKFKKGELKGQVVAVKIIPKSKMTTAIAIEDVRREVKILQALSGHKNLVQFYDAFEDNANVYIAMELCEGGELLDRILARGGKYSENDAKPVIIQILNVVAFCHFQGVVHRDLKPENFLYTSKEENSQLKAIDFGLSDFVRPDERLNDIVGSAYYVAPEVLHRSYTTEADVWSIGVIAYILLCGSRPFWARTESGIFRAVLKADPSFDEPPWPFLSSDAKDFVKRLLFKDPRRRMSASQALMHPWIRAYNTDMNIPFDILIFRQMKAYLRSSSLRKAALRALSKTLIKDEILYLKTQFSLLAPNKDGLITMDTIRMALASNATEAMKESRIPEFLALLNGLQYRGMDFEEFCAAAINVHQHESLDCWEQSIRHAYELFDKNGNRAIVIEELASELGVGPSIPVHSVLHDWIRHTDGKLSFFGFVKLLHGVSVRASGKTTR.

Positions 1-14 (MGGCTSKPSTSSGR) are enriched in polar residues. Residues 1 to 132 (MGGCTSKPST…TEVPQREEEE (132 aa)) are disordered. Residue glycine 2 is the site of N-myristoyl glycine attachment. The span at 98–110 (KHIRAALRRRKGK) shows a compositional bias: basic residues. One can recognise a Protein kinase domain in the interval 150–412 (VELGEEIGRG…ASQALMHPWI (263 aa)). ATP contacts are provided by residues 156–164 (IGRGHFGYT) and lysine 182. The active-site Proton acceptor is the aspartate 278. Serine 318 carries the post-translational modification Phosphoserine. An autoinhibitory domain region spans residues 418 to 448 (DMNIPFDILIFRQMKAYLRSSSLRKAALRAL). Residues 437 to 457 (SSSLRKAALRALSKTLIKDEI) are calmodulin binding (CaMBD). EF-hand domains follow at residues 455-491 (DEIL…ATEA), 492-527 (MKES…VHQH), 528-567 (ESLD…GPSI), and 570-599 (HSVL…VSVR). Residues asparagine 470, aspartate 472, glutamate 516, aspartate 545, asparagine 547, asparagine 549, glutamate 556, aspartate 581, and lysine 583 each coordinate Ca(2+). A Phosphoserine modification is found at serine 585.

It belongs to the protein kinase superfamily. Ser/Thr protein kinase family. CDPK subfamily. Binds calmodulin (CaM) in a calcium-dependent manner. In terms of processing, autophosphorylated.

Its subcellular location is the membrane. It carries out the reaction L-seryl-[protein] + ATP = O-phospho-L-seryl-[protein] + ADP + H(+). The catalysed reaction is L-threonyl-[protein] + ATP = O-phospho-L-threonyl-[protein] + ADP + H(+). With respect to regulation, activated by calcium and calmodulin. Autophosphorylation may play an important role in the regulation of the kinase activity. Functionally, may play a role in signal transduction pathways that involve calcium as a second messenger. The protein is CDPK-related kinase 8 (CRK8) of Arabidopsis thaliana (Mouse-ear cress).